The sequence spans 246 residues: uncharacterized protein (246 aa).

A disordered region spans residues Glu120–Ser149. A compositionally biased stretch (low complexity) spans Thr130–Ser149.

This is an uncharacterized protein from Caenorhabditis elegans.